A 613-amino-acid chain; its full sequence is Glutaminase 1 (613 aa).

A glutaminase region spans residues 33 to 315 (GAVADYIPEL…LSSHYDLHML (283 aa)). 7 residues coordinate substrate: S75, N124, E168, N175, Y199, Y251, and V269. Residues 345–457 (REILAAHEQE…LDTAIEWAED (113 aa)) form the STAS domain. Residue 480 to 595 (LLEGLSADEL…ERIMRNLAQL (116 aa)) coordinates a nucleoside 3',5'-cyclic phosphate.

The protein belongs to the glutaminase family. Homotetramer.

The catalysed reaction is L-glutamine + H2O = L-glutamate + NH4(+). This chain is Glutaminase 1 (glsA1), found in Bradyrhizobium diazoefficiens (strain JCM 10833 / BCRC 13528 / IAM 13628 / NBRC 14792 / USDA 110).